The sequence spans 501 residues: Glycerol kinase (501 aa).

An ADP-binding site is contributed by Thr-14. ATP is bound by residues Thr-14, Thr-15, and Ser-16. Thr-14 contributes to the sn-glycerol 3-phosphate binding site. Arg-18 contacts ADP. Arg-84, Glu-85, Tyr-136, and Asp-246 together coordinate sn-glycerol 3-phosphate. Residues Arg-84, Glu-85, Tyr-136, Asp-246, and Gln-247 each coordinate glycerol. The ADP site is built by Thr-268 and Gly-311. Residues Thr-268, Gly-311, Gln-315, and Gly-412 each contribute to the ATP site. Residues Gly-412 and Asn-416 each contribute to the ADP site.

This sequence belongs to the FGGY kinase family. As to quaternary structure, homotetramer and homodimer (in equilibrium).

It carries out the reaction glycerol + ATP = sn-glycerol 3-phosphate + ADP + H(+). It participates in polyol metabolism; glycerol degradation via glycerol kinase pathway; sn-glycerol 3-phosphate from glycerol: step 1/1. Activated by phosphorylation and inhibited by fructose 1,6-bisphosphate (FBP). In terms of biological role, key enzyme in the regulation of glycerol uptake and metabolism. Catalyzes the phosphorylation of glycerol to yield sn-glycerol 3-phosphate. This is Glycerol kinase from Desulforamulus reducens (strain ATCC BAA-1160 / DSM 100696 / MI-1) (Desulfotomaculum reducens).